The sequence spans 445 residues: MNRPSLKHFYIKSFGCQMNSYDGERMSELLESQGMKAAEEAATADLVVLNTCHIREKAAEKVYSEIGRLRRPDGSSPMIALAGCVAQAEGAEVLARTKMVDIVVGPQAYHHLPELIEKAASGKVVDIDMPLESKFDALPERRQVGASAFLTVQEGCDKFCTYCVVPYTRGAEVSRPWSRIVKEAHALVDKGAREITLLGQNVNAWTGEDEAGRSQGLDGLIRALAKIDGLERIRYTTSHPNDMTEGLIEAHGEIDKLMPFLHLPVQSGSNRILKAMNRAHTAESYLTLMNRLKEVRPDIALSGDFIVGFPGESEEDFQATLDLISEVGYSLAFSFAYSPRPGTPAADMDNQIDPEISRERLQRLQALLNQQQFDFNQQTIGRKATVLIERKGKKADQMIGKSPWLQSVIIEAPVAIGDLVEVTLTDAGPNSVKGQFLDQKQFATA.

The region spanning 7 to 121 (KHFYIKSFGC…LPELIEKAAS (115 aa)) is the MTTase N-terminal domain. Residues cysteine 16, cysteine 52, cysteine 84, cysteine 156, cysteine 160, and cysteine 163 each contribute to the [4Fe-4S] cluster site. A Radical SAM core domain is found at 142–374 (RQVGASAFLT…QALLNQQQFD (233 aa)). The TRAM domain maps to 377-438 (QQTIGRKATV…PNSVKGQFLD (62 aa)).

This sequence belongs to the methylthiotransferase family. MiaB subfamily. In terms of assembly, monomer. The cofactor is [4Fe-4S] cluster.

It is found in the cytoplasm. The catalysed reaction is N(6)-dimethylallyladenosine(37) in tRNA + (sulfur carrier)-SH + AH2 + 2 S-adenosyl-L-methionine = 2-methylsulfanyl-N(6)-dimethylallyladenosine(37) in tRNA + (sulfur carrier)-H + 5'-deoxyadenosine + L-methionine + A + S-adenosyl-L-homocysteine + 2 H(+). Catalyzes the methylthiolation of N6-(dimethylallyl)adenosine (i(6)A), leading to the formation of 2-methylthio-N6-(dimethylallyl)adenosine (ms(2)i(6)A) at position 37 in tRNAs that read codons beginning with uridine. The sequence is that of tRNA-2-methylthio-N(6)-dimethylallyladenosine synthase from Zymomonas mobilis subsp. mobilis (strain ATCC 31821 / ZM4 / CP4).